We begin with the raw amino-acid sequence, 529 residues long: Cytochrome P450 monooxygenase acuD (529 aa).

A helical membrane pass occupies residues 8 to 28; it reads FAVIAASAAAVAGVLFLIYAA. N81 is a glycosylation site (N-linked (GlcNAc...) asparagine). C449 lines the heme pocket.

Belongs to the cytochrome P450 family. It depends on heme as a cofactor.

Its subcellular location is the endoplasmic reticulum membrane. The catalysed reaction is 3-hydroxybenzyl alcohol + reduced [NADPH--hemoprotein reductase] + O2 = gentisyl alcohol + oxidized [NADPH--hemoprotein reductase] + H2O + H(+). Its pathway is secondary metabolite biosynthesis. In terms of biological role, cytochrome P450 monooxygenase; part of the gene cluster that mediates the biosynthesis of aculins. The pathway begins with the synthesis of 6-methylsalicylic acid by the polyketide synthase (PKS) acuA via condensation of acetate and malonate units. The 6-methylsalicylic acid decarboxylase acuB then catalyzes the decarboxylation of 6-methylsalicylic acid to yield m-cresol (also known as 3-methylphenol). These first reactions occur in the cytosol. The intermediate m-cresol is then transported into the endoplasmic reticulum where the cytochrome P450 monooxygenase acuC converts it to m-hydroxybenzyl alcohol, which is further converted to gentisyl alcohol by the cytochrome P450 monooxygenase acuD. Gentisyl alcohol is further oxidized by the oxidoreductase acuE that probably catalyzes hydroxylation of the aromatic ring. The aromatic system might then be opened by oxidation through a Baeyer-Villiger type of oxidation, which could be catalyzed by acuF, with the carboxylic acid at C-1 subsequently reduced to an aldehyde by acuG. Subsequently, a hemiacetal is formed, before the dehydrogenase acuH would reduce the double bond between C-4 and C-6. Finally, keto-enol tautomerism results in formation of aculinic acid, which exists as two diastereomers (both R/S configurations at C-1) by non-enzymatic hemiacetal formation. The carboxypeptidase acuI could be involved in the linking of aculinic acid to an aculene A moiety produced by the aculene biosynthesis cluster and which leads to the production of aculin A. AcuI may also be involved in the attachment of proline to aculinic acid to form epi-aculins A and B. In Aspergillus aculeatus (strain ATCC 16872 / CBS 172.66 / WB 5094), this protein is Cytochrome P450 monooxygenase acuD.